The primary structure comprises 106 residues: Thioredoxin (106 aa).

Residues 2–106 form the Thioredoxin domain; it reads VNFLKTKADF…GLREKIKKNK (105 aa). Residues Cys-32 and Cys-35 each act as nucleophile in the active site. Residues Cys-32 and Cys-35 are joined by a disulfide bond.

The protein belongs to the thioredoxin family.

It localises to the cytoplasm. In terms of biological role, participates in various redox reactions through the reversible oxidation of its active center dithiol to a disulfide and catalyzes dithiol-disulfide exchange reactions. The protein is Thioredoxin (THIO) of Geodia cydonium (Sponge).